A 217-amino-acid chain; its full sequence is UPF0711 protein C18orf21 homolog (217 aa).

The residue at position 126 (Ser126) is a Phosphoserine. A phosphothreonine mark is found at Thr130 and Thr139. The disordered stretch occupies residues 131–190; sequence AANKASPKTPKRTAPGSANLGQSTNGSKGKSPSLTIRTPTSGQSTPICSSRNGSKRKKHF. Residues 149–182 show a composition bias toward polar residues; the sequence is NLGQSTNGSKGKSPSLTIRTPTSGQSTPICSSRN.

It belongs to the UPF0711 family.

The polypeptide is UPF0711 protein C18orf21 homolog (Mus musculus (Mouse)).